Here is a 180-residue protein sequence, read N- to C-terminus: Translation initiation factor IF-3 (180 aa).

This sequence belongs to the IF-3 family. As to quaternary structure, monomer.

The protein resides in the cytoplasm. IF-3 binds to the 30S ribosomal subunit and shifts the equilibrium between 70S ribosomes and their 50S and 30S subunits in favor of the free subunits, thus enhancing the availability of 30S subunits on which protein synthesis initiation begins. This Hyphomonas neptunium (strain ATCC 15444) protein is Translation initiation factor IF-3.